The chain runs to 584 residues: Lamin-B1 (584 aa).

Residues 1 to 22 (MAAAVAPLSPQPRGAAASAALS) form a disordered region. The tract at residues 2–33 (AAAVAPLSPQPRGAAASAALSPTRISRLQEKE) is head. Serine 22 carries the phosphoserine modification. The 357-residue stretch at 31–387 (EKEELRQLND…KLLESEEERL (357 aa)) folds into the IF rod domain. The segment at 34–70 (ELRQLNDRLAVYIDKVRSLETENSALQRRVSEREQVC) is coil 1A. The interval 81 to 218 (FETELADARK…NVYEEEIKET (138 aa)) is coil 1B. The segment at 243-385 (QALKEIREQH…YRKLLESEEE (143 aa)) is coil 2. Residues 386-584 (RLRLSPGPSS…RKPERSCVVM (199 aa)) form a tail region. 2 disordered regions span residues 388–431 (RLSP…SVSI) and 548–584 (TVNE…CVVM). Positions 394-408 (SSRVTVSRASSSRSV) are enriched in low complexity. The short motif at 414–419 (KRKRID) is the Nuclear localization signal element. Residues 429 to 545 (VSISHSASAT…EEVAQRSTVF (117 aa)) enclose the LTD domain. Residues 551 to 565 (EGEEEEEEGEEEILE) are compositionally biased toward acidic residues. Basic and acidic residues predominate over residues 575 to 584 (RKPERSCVVM). Residue cysteine 581 is modified to Cysteine methyl ester. Cysteine 581 carries S-farnesyl cysteine lipidation. The propeptide at 582–584 (VVM) is removed in mature form.

The protein belongs to the intermediate filament family. As to quaternary structure, homodimer. Lamin dimers then assemble into dimeric head-to-tail polymers. Ultimately, two head-to-tail polymers assemble laterally into a protofilament with a uniformly shaped rod of 3.5 nm in diameter. Post-translationally, phosphorylation plays a key role in lamin organization, subcellular localization and nuclear envelope disintegration. Phosphorylation by CDK1 at Ser-22 at the onset of mitosis drives lamin disassembly and nuclear envelope breakdown.

The protein resides in the nucleus lamina. It localises to the nucleus envelope. Its subcellular location is the nucleus. The protein localises to the nucleoplasm. It is found in the nucleus matrix. Its function is as follows. Lamins are intermediate filament proteins that assemble into a filamentous meshwork, and which constitute the major components of the nuclear lamina, a fibrous layer on the nucleoplasmic side of the inner nuclear membrane. Lamins provide a framework for the nuclear envelope, bridging the nuclear envelope and chromatin. Plays an important role in nuclear assembly, chromatin organization, nuclear membrane and telomere dynamics. This is Lamin-B1 (LMNB1) from Gallus gallus (Chicken).